The primary structure comprises 582 residues: Protein bps2 (582 aa).

28 to 35 (APNAYGKT) contributes to the ATP binding site. Residues 243 to 281 (RQSYERQLQEINAQLQKITAQRNEAEIEIRLLEKVLDQI) are a coiled coil. Residues 243–351 (RQSYERQLQE…KLKELDQISS (109 aa)) form the Zinc-hook domain. Zn(2+) is bound by residues Cys292 and Cys295. A coiled-coil region spans residues 320–351 (SLYAGIKKEADELLSKKSEIEKKLKELDQISS).

This Acidianus ambivalens (Desulfurolobus ambivalens) protein is Protein bps2 (bps2).